The chain runs to 401 residues: Protein IQ-DOMAIN 24 (401 aa).

The disordered stretch occupies residues 1-48 (MGFFGRLFGSKKQEKATPNRRRWSFATRSSHPENDSSSHSSKRRGDED). The segment at 105–121 (EYKAAMKIQSAFRGYLA) is calmodulin-binding. IQ domains lie at 105-133 (EYKA…ALVK) and 134-156 (LQAL…RMQT). Low complexity-rich tracts occupy residues 165–176 (RASRSSHVSDSS) and 278–287 (RSRTGSSSGG). 2 disordered regions span residues 165 to 186 (RASR…IPSS) and 258 to 296 (SPRK…PFTP).

The protein belongs to the IQD family. As to quaternary structure, binds to multiple calmodulin (CaM) in the presence of Ca(2+) and CaM-like proteins.

It is found in the nucleus. The protein resides in the nuclear body. The protein localises to the cell membrane. Its function is as follows. May be involved in cooperative interactions with calmodulins or calmodulin-like proteins. Recruits calmodulin proteins to microtubules, thus being a potential scaffold in cellular signaling and trafficking. May associate with nucleic acids and regulate gene expression at the transcriptional or post-transcriptional level. In Arabidopsis thaliana (Mouse-ear cress), this protein is Protein IQ-DOMAIN 24.